The chain runs to 657 residues: Threonine--tRNA ligase (657 aa).

Residues 7–70 (DRQQVIITLP…TENARVSIIT (64 aa)) form the TGS domain. The interval 253 to 555 (DHRKLGAELG…LIEHTAGNFP (303 aa)) is catalytic. C351, H402, and H532 together coordinate Zn(2+).

It belongs to the class-II aminoacyl-tRNA synthetase family. In terms of assembly, homodimer. The cofactor is Zn(2+).

The protein resides in the cytoplasm. It carries out the reaction tRNA(Thr) + L-threonine + ATP = L-threonyl-tRNA(Thr) + AMP + diphosphate + H(+). In terms of biological role, catalyzes the attachment of threonine to tRNA(Thr) in a two-step reaction: L-threonine is first activated by ATP to form Thr-AMP and then transferred to the acceptor end of tRNA(Thr). Also edits incorrectly charged L-seryl-tRNA(Thr). This is Threonine--tRNA ligase from Chlorobaculum tepidum (strain ATCC 49652 / DSM 12025 / NBRC 103806 / TLS) (Chlorobium tepidum).